The following is a 382-amino-acid chain: UDP-4-amino-4-deoxy-L-arabinose--oxoglutarate aminotransferase (382 aa).

At K182 the chain carries N6-(pyridoxal phosphate)lysine.

The protein belongs to the DegT/DnrJ/EryC1 family. ArnB subfamily. As to quaternary structure, homodimer. It depends on pyridoxal 5'-phosphate as a cofactor.

The enzyme catalyses UDP-4-amino-4-deoxy-beta-L-arabinose + 2-oxoglutarate = UDP-beta-L-threo-pentopyranos-4-ulose + L-glutamate. It participates in nucleotide-sugar biosynthesis; UDP-4-deoxy-4-formamido-beta-L-arabinose biosynthesis; UDP-4-deoxy-4-formamido-beta-L-arabinose from UDP-alpha-D-glucuronate: step 2/3. The protein operates within bacterial outer membrane biogenesis; lipopolysaccharide biosynthesis. Catalyzes the conversion of UDP-4-keto-arabinose (UDP-Ara4O) to UDP-4-amino-4-deoxy-L-arabinose (UDP-L-Ara4N). The modified arabinose is attached to lipid A and is required for resistance to polymyxin and cationic antimicrobial peptides. This chain is UDP-4-amino-4-deoxy-L-arabinose--oxoglutarate aminotransferase, found in Pectobacterium atrosepticum (strain SCRI 1043 / ATCC BAA-672) (Erwinia carotovora subsp. atroseptica).